A 37-amino-acid polypeptide reads, in one-letter code: Large ribosomal subunit protein bL36 (37 aa).

This sequence belongs to the bacterial ribosomal protein bL36 family.

This chain is Large ribosomal subunit protein bL36, found in Koribacter versatilis (strain Ellin345).